We begin with the raw amino-acid sequence, 387 residues long: MLPLLLPLLWAGALALEGIFQLEVPESVTVQEGLCVFVPCTFFYPRHTFIKISLACGYWFREGDNPLRDAPVATNDPARQVREETRGRFRLLGNPREKNCSLSIRDARRRDSGSYFFRVEEAMMKYNYKDPPLSVHVTALTHRPDILIPGALKSGRPRNLVCSVPWACEQGTPPIFSWIGTSVSPLSPTTALSSVVTLIPQPQDHGSRLTCQVTLPGAGVTTTRTVRLNVSYPPQNLTLTVFQGDGTASTTLRNESSLQVLEGQSLRLVCAVDSNPPARLSWAQDNLILSPSQPNPGMLELPQMHLRNEGEFTCQARNPLGSQQVSLRLFVQRKSGPMAEVVLVAIGEAAVKILLLFLCLIILRVKSHRRKAAKAATGVEAAKVVKG.

An N-terminal signal peptide occupies residues 1–15 (MLPLLLPLLWAGALA). An Ig-like V-type domain is found at 16-138 (LEGIFQLEVP…KDPPLSVHVT (123 aa)). Residues 16–341 (LEGIFQLEVP…QRKSGPMAEV (326 aa)) are Extracellular-facing. Disulfide bonds link cysteine 35–cysteine 168, cysteine 40–cysteine 100, and cysteine 162–cysteine 211. Asparagine 99 carries an N-linked (GlcNAc...) asparagine glycan. Arginine 118 lines the N-acetylneuraminate pocket. One can recognise an Ig-like C2-type 1 domain in the interval 144-227 (PDILIPGALK…AGVTTTRTVR (84 aa)). N-linked (GlcNAc...) asparagine glycans are attached at residues asparagine 229, asparagine 236, and asparagine 254. The Ig-like C2-type 2 domain maps to 234–326 (PQNLTLTVFQ…RNPLGSQQVS (93 aa)). Cysteine 270 and cysteine 314 are oxidised to a cystine. Residues 342–362 (VLVAIGEAAVKILLLFLCLII) traverse the membrane as a helical segment. At 363–387 (LRVKSHRRKAAKAATGVEAAKVVKG) the chain is on the cytoplasmic side.

The protein belongs to the immunoglobulin superfamily. SIGLEC (sialic acid binding Ig-like lectin) family.

Its subcellular location is the membrane. In terms of biological role, putative adhesion molecule that mediates sialic-acid dependent binding to cells. The polypeptide is Sialic acid-binding Ig-like lectin 13 (SIGLEC13) (Pan troglodytes (Chimpanzee)).